The primary structure comprises 175 residues: Protein ppBat (175 aa).

The Zn(2+) site is built by cysteine 74 and cysteine 111. Residues asparagine 161 and tryptophan 164 each coordinate riboflavin.

In terms of assembly, homodimer.

In terms of biological role, binds flavin derivatives, such as lumichrome, riboflavin, FMN, and FAD. May act as a flavin storage protein. Appears to lack proteolytic or chaperone activities. The polypeptide is Protein ppBat (Bacteroides thetaiotaomicron (strain ATCC 29148 / DSM 2079 / JCM 5827 / CCUG 10774 / NCTC 10582 / VPI-5482 / E50)).